Reading from the N-terminus, the 218-residue chain is Octanoyltransferase (218 aa).

The region spanning 32-214 (VLTADEIWLV…HFTQLLGYND (183 aa)) is the BPL/LPL catalytic domain. Residues 71-78 (RGGQITYH), 143-145 (SLG), and 156-158 (GLA) each bind substrate. C174 acts as the Acyl-thioester intermediate in catalysis.

The protein belongs to the LipB family.

Its subcellular location is the cytoplasm. It carries out the reaction octanoyl-[ACP] + L-lysyl-[protein] = N(6)-octanoyl-L-lysyl-[protein] + holo-[ACP] + H(+). It functions in the pathway protein modification; protein lipoylation via endogenous pathway; protein N(6)-(lipoyl)lysine from octanoyl-[acyl-carrier-protein]: step 1/2. Catalyzes the transfer of endogenously produced octanoic acid from octanoyl-acyl-carrier-protein onto the lipoyl domains of lipoate-dependent enzymes. Lipoyl-ACP can also act as a substrate although octanoyl-ACP is likely to be the physiological substrate. This Histophilus somni (strain 2336) (Haemophilus somnus) protein is Octanoyltransferase.